The sequence spans 82 residues: Penaeidin-3h (82 aa).

A signal peptide spans 1–19 (MRLVVCLVFLASFALVCQG). The residue at position 20 (Gln20) is a Pyrrolidone carboxylic acid. Cystine bridges form between Cys55–Cys73 and Cys67–Cys74. Ser81 carries the serine amide modification.

This sequence belongs to the penaeidin family.

The protein resides in the cytoplasmic granule. In terms of biological role, antibacterial and antifungal activity. Presents chitin-binding activity. This chain is Penaeidin-3h, found in Penaeus vannamei (Whiteleg shrimp).